Reading from the N-terminus, the 478-residue chain is WD repeat-containing protein AAC3 (478 aa).

Disordered regions lie at residues 33-53 (HPLF…QQQQ) and 106-140 (SQIH…QYTN). The segment covering 106 to 125 (SQIHQQSQQSQLSNNLNSNS) has biased composition (low complexity). Polar residues predominate over residues 126 to 140 (KESTNIPKTNTQYTN). 7 WD repeats span residues 163–202 (GNKK…NSNN), 226–268 (GHDG…GTVS), 270–307 (NSEN…TLKI), 310–349 (FNGE…TTHV), 357–396 (GHTA…CVKT), 399–438 (KSTF…PIHT), and 440–478 (ECSG…GYHS).

Belongs to the THOC3 family.

In Dictyostelium discoideum (Social amoeba), this protein is WD repeat-containing protein AAC3 (AAC3).